The following is a 350-amino-acid chain: Heat-inducible transcription repressor HrcA (350 aa).

This sequence belongs to the HrcA family.

Functionally, negative regulator of class I heat shock genes (grpE-dnaK-dnaJ and groELS operons). Prevents heat-shock induction of these operons. This is Heat-inducible transcription repressor HrcA from Ligilactobacillus salivarius (strain UCC118) (Lactobacillus salivarius).